Reading from the N-terminus, the 143-residue chain is Transcriptional regulator MraZ (143 aa).

2 consecutive SpoVT-AbrB domains span residues 5 to 47 (TYTP…SARE) and 76 to 119 (ASDE…DSES).

Belongs to the MraZ family. In terms of assembly, forms oligomers.

The protein resides in the cytoplasm. The protein localises to the nucleoid. The sequence is that of Transcriptional regulator MraZ from Micrococcus luteus (strain ATCC 4698 / DSM 20030 / JCM 1464 / CCM 169 / CCUG 5858 / IAM 1056 / NBRC 3333 / NCIMB 9278 / NCTC 2665 / VKM Ac-2230) (Micrococcus lysodeikticus).